Reading from the N-terminus, the 291-residue chain is Phytanoyl-CoA dioxygenase domain-containing protein 1 (291 aa).

2-oxoglutarate contacts are provided by residues lysine 102, methionine 141, histidine 156 to aspartate 158, and tryptophan 174. Positions 156 and 158 each coordinate Fe cation. Histidine 246 is a Fe cation binding site. Positions 248 and 257 each coordinate 2-oxoglutarate.

Belongs to the PhyH family. PHYHD1 subfamily. Fe cation is required as a cofactor.

In terms of biological role, 2-oxoglutarate(2OG)-dependent dioxygenase that catalyzes the conversion of 2-oxoglutarate to succinate and CO(2) in an iron-dependent manner. However, does not couple 2OG turnover to the hydroxylation of acyl-coenzyme A derivatives, implying that it is not directly involved in phytanoyl coenzyme-A metabolism. Does not show detectable activity towards fatty acid CoA thioesters. The sequence is that of Phytanoyl-CoA dioxygenase domain-containing protein 1 (phyhd1) from Danio rerio (Zebrafish).